The primary structure comprises 191 residues: Leucyl/phenylalanyl-tRNA--protein transferase (191 aa).

This sequence belongs to the L/F-transferase family.

It is found in the cytoplasm. It catalyses the reaction N-terminal L-lysyl-[protein] + L-leucyl-tRNA(Leu) = N-terminal L-leucyl-L-lysyl-[protein] + tRNA(Leu) + H(+). It carries out the reaction N-terminal L-arginyl-[protein] + L-leucyl-tRNA(Leu) = N-terminal L-leucyl-L-arginyl-[protein] + tRNA(Leu) + H(+). The catalysed reaction is L-phenylalanyl-tRNA(Phe) + an N-terminal L-alpha-aminoacyl-[protein] = an N-terminal L-phenylalanyl-L-alpha-aminoacyl-[protein] + tRNA(Phe). Functionally, functions in the N-end rule pathway of protein degradation where it conjugates Leu, Phe and, less efficiently, Met from aminoacyl-tRNAs to the N-termini of proteins containing an N-terminal arginine or lysine. The polypeptide is Leucyl/phenylalanyl-tRNA--protein transferase (Gloeothece citriformis (strain PCC 7424) (Cyanothece sp. (strain PCC 7424))).